The following is a 67-amino-acid chain: MPKMKTKSSAKKRFKITASGKVKVAAAGKRHGMIKRSNKFIRDARGTMVLSEQDAKKVIQHYLPNGL.

Belongs to the bacterial ribosomal protein bL35 family.

The polypeptide is Large ribosomal subunit protein bL35 (Bartonella henselae (strain ATCC 49882 / DSM 28221 / CCUG 30454 / Houston 1) (Rochalimaea henselae)).